Here is a 369-residue protein sequence, read N- to C-terminus: Flagellar P-ring protein (369 aa).

The first 22 residues, 1–22 (MTKFKHLLALAALLLAAGAAQA), serve as a signal peptide directing secretion.

Belongs to the FlgI family. The basal body constitutes a major portion of the flagellar organelle and consists of four rings (L,P,S, and M) mounted on a central rod.

It is found in the periplasm. Its subcellular location is the bacterial flagellum basal body. In terms of biological role, assembles around the rod to form the L-ring and probably protects the motor/basal body from shearing forces during rotation. The sequence is that of Flagellar P-ring protein from Pseudomonas aeruginosa (strain LESB58).